Here is a 612-residue protein sequence, read N- to C-terminus: Dihydroxy-acid dehydratase (612 aa).

A Mg(2+)-binding site is contributed by Asp-81. Residue Cys-122 participates in [2Fe-2S] cluster binding. Positions 123 and 124 each coordinate Mg(2+). Lys-124 bears the N6-carboxylysine mark. Cys-193 contributes to the [2Fe-2S] cluster binding site. Glu-489 is a binding site for Mg(2+). Ser-515 functions as the Proton acceptor in the catalytic mechanism.

Belongs to the IlvD/Edd family. In terms of assembly, homodimer. [2Fe-2S] cluster serves as cofactor. Requires Mg(2+) as cofactor.

The catalysed reaction is (2R)-2,3-dihydroxy-3-methylbutanoate = 3-methyl-2-oxobutanoate + H2O. It catalyses the reaction (2R,3R)-2,3-dihydroxy-3-methylpentanoate = (S)-3-methyl-2-oxopentanoate + H2O. It participates in amino-acid biosynthesis; L-isoleucine biosynthesis; L-isoleucine from 2-oxobutanoate: step 3/4. Its pathway is amino-acid biosynthesis; L-valine biosynthesis; L-valine from pyruvate: step 3/4. Its function is as follows. Functions in the biosynthesis of branched-chain amino acids. Catalyzes the dehydration of (2R,3R)-2,3-dihydroxy-3-methylpentanoate (2,3-dihydroxy-3-methylvalerate) into 2-oxo-3-methylpentanoate (2-oxo-3-methylvalerate) and of (2R)-2,3-dihydroxy-3-methylbutanoate (2,3-dihydroxyisovalerate) into 2-oxo-3-methylbutanoate (2-oxoisovalerate), the penultimate precursor to L-isoleucine and L-valine, respectively. This chain is Dihydroxy-acid dehydratase, found in Pseudomonas aeruginosa (strain LESB58).